A 565-amino-acid chain; its full sequence is Sulfite reductase [NADPH] hemoprotein beta-component (565 aa).

[4Fe-4S] cluster is bound by residues cysteine 429, cysteine 435, cysteine 474, and cysteine 478. Cysteine 478 serves as a coordination point for siroheme.

This sequence belongs to the nitrite and sulfite reductase 4Fe-4S domain family. In terms of assembly, alpha(8)-beta(8). The alpha component is a flavoprotein, the beta component is a hemoprotein. Siroheme is required as a cofactor. [4Fe-4S] cluster serves as cofactor.

It catalyses the reaction hydrogen sulfide + 3 NADP(+) + 3 H2O = sulfite + 3 NADPH + 4 H(+). The protein operates within sulfur metabolism; hydrogen sulfide biosynthesis; hydrogen sulfide from sulfite (NADPH route): step 1/1. Functionally, component of the sulfite reductase complex that catalyzes the 6-electron reduction of sulfite to sulfide. This is one of several activities required for the biosynthesis of L-cysteine from sulfate. The protein is Sulfite reductase [NADPH] hemoprotein beta-component of Pseudoalteromonas translucida (strain TAC 125).